The chain runs to 327 residues: Phenylalanine--tRNA ligase alpha subunit (327 aa).

A Mg(2+)-binding site is contributed by E252.

Belongs to the class-II aminoacyl-tRNA synthetase family. Phe-tRNA synthetase alpha subunit type 1 subfamily. As to quaternary structure, tetramer of two alpha and two beta subunits. Requires Mg(2+) as cofactor.

Its subcellular location is the cytoplasm. It carries out the reaction tRNA(Phe) + L-phenylalanine + ATP = L-phenylalanyl-tRNA(Phe) + AMP + diphosphate + H(+). The chain is Phenylalanine--tRNA ligase alpha subunit from Aliivibrio fischeri (strain ATCC 700601 / ES114) (Vibrio fischeri).